Here is a 258-residue protein sequence, read N- to C-terminus: MPYVTMKQLLETGVHFGHQTRRWNPKMRPFIFGARNGIHIIDLQQTVKLYQKAHDFISNVVAGGGRVIFVGTKRQAQESVKKEAERVGQFSVTNRWMGGMLTNFQTIKKSIDRMKTLERMFEDGSIKRFPKKEIVMMGREVAKLNDNLGGIKHMDRLPQAAFIIDPKREEIAVQECRKLGIPIVAVVDTNCDPDVIDYVIPGNDDAIRAIKLFAASIAEACMEGAAQNKDVEPVADKDEKPEAAPVDEAETATETTGE.

Residues 226–258 (AQNKDVEPVADKDEKPEAAPVDEAETATETTGE) form a disordered region. Positions 229-242 (KDVEPVADKDEKPE) are enriched in basic and acidic residues. Residues 245–258 (PVDEAETATETTGE) are compositionally biased toward acidic residues.

Belongs to the universal ribosomal protein uS2 family.

The protein is Small ribosomal subunit protein uS2 of Solidesulfovibrio magneticus (strain ATCC 700980 / DSM 13731 / RS-1) (Desulfovibrio magneticus).